Here is a 363-residue protein sequence, read N- to C-terminus: Protein-glutamate methylesterase/protein-glutamine glutaminase 3 (363 aa).

The 118-residue stretch at 8-125 (KVLCVDDSAL…RDGMLDYAEK (118 aa)) folds into the Response regulatory domain. Asp59 carries the 4-aspartylphosphate modification. One can recognise a CheB-type methylesterase domain in the interval 164–356 (LVSTEKLIII…RRVMARLATM (193 aa)). Residues Ser176, His202, and Asp298 contribute to the active site.

It belongs to the CheB family. Phosphorylated by CheA. Phosphorylation of the N-terminal regulatory domain activates the methylesterase activity.

It is found in the cytoplasm. The enzyme catalyses [protein]-L-glutamate 5-O-methyl ester + H2O = L-glutamyl-[protein] + methanol + H(+). It catalyses the reaction L-glutaminyl-[protein] + H2O = L-glutamyl-[protein] + NH4(+). Its function is as follows. Involved in chemotaxis. Part of a chemotaxis signal transduction system that modulates chemotaxis in response to various stimuli. Catalyzes the demethylation of specific methylglutamate residues introduced into the chemoreceptors (methyl-accepting chemotaxis proteins or MCP) by CheR. Also mediates the irreversible deamidation of specific glutamine residues to glutamic acid. The polypeptide is Protein-glutamate methylesterase/protein-glutamine glutaminase 3 (Burkholderia lata (strain ATCC 17760 / DSM 23089 / LMG 22485 / NCIMB 9086 / R18194 / 383)).